The sequence spans 170 residues: Putative 4-hydroxy-4-methyl-2-oxoglutarate aldolase (170 aa).

Residues 81–84 (GDII) and R103 contribute to the substrate site. Position 104 (D104) interacts with a divalent metal cation.

The protein belongs to the class II aldolase/RraA-like family. As to quaternary structure, homotrimer. The cofactor is a divalent metal cation.

It carries out the reaction 4-hydroxy-4-methyl-2-oxoglutarate = 2 pyruvate. It catalyses the reaction oxaloacetate + H(+) = pyruvate + CO2. Catalyzes the aldol cleavage of 4-hydroxy-4-methyl-2-oxoglutarate (HMG) into 2 molecules of pyruvate. Also contains a secondary oxaloacetate (OAA) decarboxylase activity due to the common pyruvate enolate transition state formed following C-C bond cleavage in the retro-aldol and decarboxylation reactions. This is Putative 4-hydroxy-4-methyl-2-oxoglutarate aldolase from Corynebacterium efficiens (strain DSM 44549 / YS-314 / AJ 12310 / JCM 11189 / NBRC 100395).